The primary structure comprises 92 residues: Acylphosphatase (92 aa).

Positions 5–90 constitute an Acylphosphatase-like domain; the sequence is TWRLVAHGRV…GEFAGFEFRP (86 aa). Catalysis depends on residues Arg-20 and Asn-38.

The protein belongs to the acylphosphatase family.

The catalysed reaction is an acyl phosphate + H2O = a carboxylate + phosphate + H(+). This Cupriavidus necator (strain ATCC 17699 / DSM 428 / KCTC 22496 / NCIMB 10442 / H16 / Stanier 337) (Ralstonia eutropha) protein is Acylphosphatase (acyP).